The following is a 310-amino-acid chain: Ribosomal RNA small subunit methyltransferase H (310 aa).

Residues alanine 32–histidine 34, aspartate 52, phenylalanine 79, aspartate 100, and glutamine 107 contribute to the S-adenosyl-L-methionine site.

Belongs to the methyltransferase superfamily. RsmH family.

Its subcellular location is the cytoplasm. The catalysed reaction is cytidine(1402) in 16S rRNA + S-adenosyl-L-methionine = N(4)-methylcytidine(1402) in 16S rRNA + S-adenosyl-L-homocysteine + H(+). In terms of biological role, specifically methylates the N4 position of cytidine in position 1402 (C1402) of 16S rRNA. The sequence is that of Ribosomal RNA small subunit methyltransferase H from Halalkalibacterium halodurans (strain ATCC BAA-125 / DSM 18197 / FERM 7344 / JCM 9153 / C-125) (Bacillus halodurans).